We begin with the raw amino-acid sequence, 326 residues long: ATP synthase subunit b 2 (326 aa).

Residues 2–22 (LIDWFTVVAQALNFLILVWLL) traverse the membrane as a helical segment. 2 stretches are compositionally biased toward basic and acidic residues: residues 275 to 298 (QQGRKEGRAVQNWDKAESEIRKEN) and 306 to 326 (PPPEAKAKPKPEEPKPEIGSP). The interval 275–326 (QQGRKEGRAVQNWDKAESEIRKENLSPAKTEPPPEAKAKPKPEEPKPEIGSP) is disordered.

It belongs to the ATPase B chain family. F-type ATPases have 2 components, F(1) - the catalytic core - and F(0) - the membrane proton channel. F(1) has five subunits: alpha(3), beta(3), gamma(1), delta(1), epsilon(1). F(0) has three main subunits: a(1), b(2) and c(10-14). The alpha and beta chains form an alternating ring which encloses part of the gamma chain. F(1) is attached to F(0) by a central stalk formed by the gamma and epsilon chains, while a peripheral stalk is formed by the delta and b chains.

The protein resides in the cell inner membrane. Its function is as follows. F(1)F(0) ATP synthase produces ATP from ADP in the presence of a proton or sodium gradient. F-type ATPases consist of two structural domains, F(1) containing the extramembraneous catalytic core and F(0) containing the membrane proton channel, linked together by a central stalk and a peripheral stalk. During catalysis, ATP synthesis in the catalytic domain of F(1) is coupled via a rotary mechanism of the central stalk subunits to proton translocation. Functionally, component of the F(0) channel, it forms part of the peripheral stalk, linking F(1) to F(0). The protein is ATP synthase subunit b 2 of Albidiferax ferrireducens (strain ATCC BAA-621 / DSM 15236 / T118) (Rhodoferax ferrireducens).